The chain runs to 506 residues: Aspartic proteinase A1 (506 aa).

The signal sequence occupies residues 1–24 (MKIYSRTVAVSLIVSFLLCFSAFA). Positions 25-64 (ERNDGTFRVGLKKLKLDSKNRLAARVESKQEKPLRAYRLG) are cleaved as a propeptide — activation peptide. Positions 82-503 (YYGEIAIGTP…DFGNEQVGFA (422 aa)) constitute a Peptidase A1 domain. Residue D100 is part of the active site. 2 disulfides stabilise this stretch: C113-C119 and C278-C282. D287 is an active-site residue. In terms of domain architecture, Saposin B-type spans 312–417 (VVSQQCKTVV…NELCERLPSP (106 aa)). Disulfide bonds link C317–C411, C342–C383, C348–C380, and C425–C462. N397 is a glycosylation site (N-linked (GlcNAc...) asparagine).

The protein belongs to the peptidase A1 family. Expressed in roots, leaves, stems, petals, carpels, seed pods and dry seeds.

The protein resides in the vacuole. Functionally, involved in the breakdown of propeptides of storage proteins in protein-storage vacuoles. Possesses aspartic protease activity in vitro. This chain is Aspartic proteinase A1 (APA1), found in Arabidopsis thaliana (Mouse-ear cress).